A 169-amino-acid polypeptide reads, in one-letter code: MAVKGLGKPDQVYDGSKIRVGIIHARWNRVIIDALVKGAIERMASLGVEENNIIIETVPGSYELPWGTKRFVDRQAKLGKPLDVVIPIGVLIKGSTMHFEYISDSTTHALMNLQEKVDMPVIFGLLTCMTEEQALARAGIDEAHSMHNHGEDWGAAAVEMAVKFGKNAF.

Residues tryptophan 27, 61 to 63, and 90 to 92 contribute to the 5-amino-6-(D-ribitylamino)uracil site; these read SYE and VLI. 95 to 96 lines the (2S)-2-hydroxy-3-oxobutyl phosphate pocket; the sequence is ST. Residue histidine 98 is the Proton donor of the active site. A 5-amino-6-(D-ribitylamino)uracil-binding site is contributed by phenylalanine 123. Arginine 137 contacts (2S)-2-hydroxy-3-oxobutyl phosphate.

This sequence belongs to the DMRL synthase family. Homopentamer.

The protein resides in the mitochondrion intermembrane space. The catalysed reaction is (2S)-2-hydroxy-3-oxobutyl phosphate + 5-amino-6-(D-ribitylamino)uracil = 6,7-dimethyl-8-(1-D-ribityl)lumazine + phosphate + 2 H2O + H(+). The protein operates within cofactor biosynthesis; riboflavin biosynthesis; riboflavin from 2-hydroxy-3-oxobutyl phosphate and 5-amino-6-(D-ribitylamino)uracil: step 1/2. Its function is as follows. Catalyzes the formation of 6,7-dimethyl-8-ribityllumazine by condensation of 5-amino-6-(D-ribitylamino)uracil with 3,4-dihydroxy-2-butanone 4-phosphate. This is the penultimate step in the biosynthesis of riboflavin. The sequence is that of 6,7-dimethyl-8-ribityllumazine synthase (RIB4) from Saccharomyces cerevisiae (strain ATCC 204508 / S288c) (Baker's yeast).